A 278-amino-acid chain; its full sequence is 4-deoxy-L-threo-5-hexosulose-uronate ketol-isomerase (278 aa).

Residues His196, His198, Glu203, and His245 each contribute to the Zn(2+) site.

The protein belongs to the KduI family. Zn(2+) serves as cofactor.

It catalyses the reaction 5-dehydro-4-deoxy-D-glucuronate = 3-deoxy-D-glycero-2,5-hexodiulosonate. It functions in the pathway glycan metabolism; pectin degradation; 2-dehydro-3-deoxy-D-gluconate from pectin: step 4/5. Its function is as follows. Catalyzes the isomerization of 5-dehydro-4-deoxy-D-glucuronate to 3-deoxy-D-glycero-2,5-hexodiulosonate. This is 4-deoxy-L-threo-5-hexosulose-uronate ketol-isomerase from Salmonella paratyphi A (strain ATCC 9150 / SARB42).